The chain runs to 333 residues: L-lactate dehydrogenase A chain (333 aa).

NAD(+) is bound by residues 30-58 (GAVG…IEDK) and Arg100. Substrate-binding residues include Arg107, Asn139, and Arg170. Asn139 is an NAD(+) binding site. Catalysis depends on His194, which acts as the Proton acceptor. Thr249 provides a ligand contact to substrate.

Belongs to the LDH/MDH superfamily. LDH family. In terms of assembly, homotetramer.

The protein resides in the cytoplasm. It carries out the reaction (S)-lactate + NAD(+) = pyruvate + NADH + H(+). It participates in fermentation; pyruvate fermentation to lactate; (S)-lactate from pyruvate: step 1/1. Interconverts simultaneously and stereospecifically pyruvate and lactate with concomitant interconversion of NADH and NAD(+). The chain is L-lactate dehydrogenase A chain (LDHA) from Ambystoma mexicanum (Axolotl).